The chain runs to 893 residues: Serine/threonine-protein kinase PLK4 (893 aa).

A Protein kinase domain is found at 12–265 (FRVGNLLGKG…LSSVLDHPFM (254 aa)). Residues 18-26 (LGKGSFAGV) and Lys41 each bind ATP. 2 positions are modified to N6-acetyllysine: Lys45 and Lys46. Catalysis depends on Asp136, which acts as the Proton acceptor. Residues 349 to 358 (NQEQETSNSG) are compositionally biased toward polar residues. Residues 349–393 (NQEQETSNSGRGRVIQEAEERPHSRYLRRAHSSDRSETSHGQSRV) are disordered. The span at 362–371 (VIQEAEERPH) shows a compositional bias: basic and acidic residues. A phosphoserine mark is found at Ser403 and Ser588. In terms of domain architecture, Cryptic POLO box 1 (CPB1) spans 509 to 622 (TLRSITSPLT…SRFVQLVRSK (114 aa)). The Cryptic POLO box 2 (CPB2) domain occupies 623 to 736 (SPKITYFTRY…GRRPSSTSSP (114 aa)). The segment at 730–749 (PSSTSSPKALTPPPPVDPNY) is disordered. The region spanning 809–887 (QLLKSVFVKN…LSSILLMFSN (79 aa)) is the POLO box domain.

It belongs to the protein kinase superfamily. Ser/Thr protein kinase family. CDC5/Polo subfamily. In terms of assembly, homodimer. Interacts with CEP152 (via N-terminus). Interacts with CEP78; this interaction may be important for proper PLK4 localization to the centriole and PLK4-induced overduplication of centrioles. Interacts with CEP131. Interacts simultaneously with TENT5C and CEP192. Interacts with TENT5C; this interaction leads to the TENT5C recruitment in the centrosome. Interacts with CEP85; this interaction may be important in cell migration and centriole assembly. Ubiquitinated; leading to its degradation by the proteasome. Post-translationally, tyrosine-phosphorylated by TEC. In terms of processing, acetylation by KAT2A and KAT2B impairs kinase activity by shifting the kinase to an inactive conformation.

The protein resides in the cytoplasm. The protein localises to the cytoskeleton. It localises to the microtubule organizing center. It is found in the centrosome. Its subcellular location is the centriole. The protein resides in the nucleus. The protein localises to the nucleolus. It localises to the cleavage furrow. The enzyme catalyses L-seryl-[protein] + ATP = O-phospho-L-seryl-[protein] + ADP + H(+). It carries out the reaction L-threonyl-[protein] + ATP = O-phospho-L-threonyl-[protein] + ADP + H(+). In terms of biological role, serine/threonine-protein kinase that plays a central role in centriole duplication. Able to trigger procentriole formation on the surface of the parental centriole cylinder, leading to the recruitment of centriole biogenesis proteins such as SASS6, CPAP, CCP110, CEP135 and gamma-tubulin. When overexpressed, it is able to induce centrosome amplification through the simultaneous generation of multiple procentrioles adjoining each parental centriole during S phase. Phosphorylates 'Ser-151' of FBXW5 during the G1/S transition, leading to inhibit FBXW5 ability to ubiquitinate SASS6. Its central role in centriole replication suggests a possible role in tumorigenesis, centrosome aberrations being frequently observed in tumors. Also involved in deuterosome-mediated centriole amplification in multiciliated that can generate more than 100 centrioles. Also involved in trophoblast differentiation by phosphorylating HAND1, leading to disrupt the interaction between HAND1 and MDFIC and activate HAND1. Phosphorylates CDC25C and CHEK2. Required for the recruitment of STIL to the centriole and for STIL-mediated centriole amplification. Phosphorylates CEP131 and PCM1 which is essential for proper organization and integrity of centriolar satellites. The polypeptide is Serine/threonine-protein kinase PLK4 (Bos taurus (Bovine)).